Consider the following 379-residue polypeptide: Isocitrate dehydrogenase [NAD] subunit 2, mitochondrial (379 aa).

A mitochondrion-targeting transit peptide spans 1–27; sequence MSMLSTLRTAGSLRTFSRSACYSFQRF. Residues Arg-129, Arg-139, Arg-160, and Asp-247 each coordinate substrate. Asp-247, Asp-273, and Asp-277 together coordinate Mg(2+).

Belongs to the isocitrate and isopropylmalate dehydrogenases family. As to quaternary structure, octamer of two non-identical subunits IDH1 and IDH2. The cofactor is Mg(2+). It depends on Mn(2+) as a cofactor.

Its subcellular location is the mitochondrion. The enzyme catalyses D-threo-isocitrate + NAD(+) = 2-oxoglutarate + CO2 + NADH. Its function is as follows. Performs an essential role in the oxidative function of the citric acid cycle and is involved in glutamate biosynthesis. Also binds RNA; specifically to the 5'-untranslated leaders of mitochondrial mRNAs. This chain is Isocitrate dehydrogenase [NAD] subunit 2, mitochondrial (idh2), found in Schizosaccharomyces pombe (strain 972 / ATCC 24843) (Fission yeast).